A 341-amino-acid polypeptide reads, in one-letter code: Glycerol-3-phosphate dehydrogenase [NAD(P)+] (341 aa).

The NADPH site is built by Ser15, Trp16, Arg36, and Lys110. Positions 110, 139, and 141 each coordinate sn-glycerol 3-phosphate. Position 143 (Ala143) interacts with NADPH. Sn-glycerol 3-phosphate contacts are provided by Lys194, Asp247, Ser257, Arg258, and Asn259. The active-site Proton acceptor is Lys194. Arg258 provides a ligand contact to NADPH. Residues Val282 and Glu284 each coordinate NADPH.

The protein belongs to the NAD-dependent glycerol-3-phosphate dehydrogenase family.

The protein localises to the cytoplasm. The catalysed reaction is sn-glycerol 3-phosphate + NAD(+) = dihydroxyacetone phosphate + NADH + H(+). It catalyses the reaction sn-glycerol 3-phosphate + NADP(+) = dihydroxyacetone phosphate + NADPH + H(+). The protein operates within membrane lipid metabolism; glycerophospholipid metabolism. Functionally, catalyzes the reduction of the glycolytic intermediate dihydroxyacetone phosphate (DHAP) to sn-glycerol 3-phosphate (G3P), the key precursor for phospholipid synthesis. This Xanthomonas oryzae pv. oryzae (strain MAFF 311018) protein is Glycerol-3-phosphate dehydrogenase [NAD(P)+].